The following is a 270-amino-acid chain: Putative pyruvate, phosphate dikinase regulatory protein (270 aa).

Residue 153–160 (GVSRTSKT) coordinates ADP.

This sequence belongs to the pyruvate, phosphate/water dikinase regulatory protein family. PDRP subfamily.

The catalysed reaction is N(tele)-phospho-L-histidyl/L-threonyl-[pyruvate, phosphate dikinase] + ADP = N(tele)-phospho-L-histidyl/O-phospho-L-threonyl-[pyruvate, phosphate dikinase] + AMP + H(+). The enzyme catalyses N(tele)-phospho-L-histidyl/O-phospho-L-threonyl-[pyruvate, phosphate dikinase] + phosphate + H(+) = N(tele)-phospho-L-histidyl/L-threonyl-[pyruvate, phosphate dikinase] + diphosphate. Its function is as follows. Bifunctional serine/threonine kinase and phosphorylase involved in the regulation of the pyruvate, phosphate dikinase (PPDK) by catalyzing its phosphorylation/dephosphorylation. This chain is Putative pyruvate, phosphate dikinase regulatory protein, found in Halalkalibacterium halodurans (strain ATCC BAA-125 / DSM 18197 / FERM 7344 / JCM 9153 / C-125) (Bacillus halodurans).